Consider the following 201-residue polypeptide: Twin horsetail protein 2 (201 aa).

The protein localises to the nucleus. Its function is as follows. Required for correct meiotic chromosome segregation and recombination. This Schizosaccharomyces pombe (strain 972 / ATCC 24843) (Fission yeast) protein is Twin horsetail protein 2 (tht2).